Reading from the N-terminus, the 144-residue chain is Hemoglobin subunit alpha-1 (144 aa).

Ser-1 carries the post-translational modification N-acetylserine. The region spanning 1–144 is the Globin domain; the sequence is SLTAKDKSVV…VSAALADKYR (144 aa). His-61 contributes to the O2 binding site. His-90 contributes to the heme b binding site.

It belongs to the globin family. In terms of assembly, heterotetramer of two alpha chains and two beta chains. In terms of tissue distribution, red blood cells.

In terms of biological role, involved in oxygen transport from gills to the various peripheral tissues. The protein is Hemoglobin subunit alpha-1 (hba1) of Oncorhynchus mykiss (Rainbow trout).